We begin with the raw amino-acid sequence, 459 residues long: Cysteine--tRNA ligase (459 aa).

C27 contributes to the Zn(2+) binding site. Positions 29-39 match the 'HIGH' region motif; sequence VTVYDDCHIGH. The Zn(2+) site is built by C208, H233, and E237. The 'KMSKS' region motif lies at 265–269; sequence KMSKS. K268 serves as a coordination point for ATP.

This sequence belongs to the class-I aminoacyl-tRNA synthetase family. As to quaternary structure, monomer. Requires Zn(2+) as cofactor.

It localises to the cytoplasm. The catalysed reaction is tRNA(Cys) + L-cysteine + ATP = L-cysteinyl-tRNA(Cys) + AMP + diphosphate. This is Cysteine--tRNA ligase from Francisella tularensis subsp. mediasiatica (strain FSC147).